The following is a 99-amino-acid chain: NADH-quinone oxidoreductase subunit K (99 aa).

3 helical membrane-spanning segments follow: residues 2-22 (PVEY…LGVL), 28-48 (LILM…FLAF), and 60-80 (IAFF…AVVI).

It belongs to the complex I subunit 4L family. As to quaternary structure, NDH-1 is composed of 14 different subunits. Subunits NuoA, H, J, K, L, M, N constitute the membrane sector of the complex.

It localises to the cell inner membrane. It catalyses the reaction a quinone + NADH + 5 H(+)(in) = a quinol + NAD(+) + 4 H(+)(out). Its function is as follows. NDH-1 shuttles electrons from NADH, via FMN and iron-sulfur (Fe-S) centers, to quinones in the respiratory chain. The immediate electron acceptor for the enzyme in this species is believed to be ubiquinone. Couples the redox reaction to proton translocation (for every two electrons transferred, four hydrogen ions are translocated across the cytoplasmic membrane), and thus conserves the redox energy in a proton gradient. The sequence is that of NADH-quinone oxidoreductase subunit K from Anaeromyxobacter dehalogenans (strain 2CP-C).